Here is a 690-residue protein sequence, read N- to C-terminus: Calpain-9 (690 aa).

The disordered stretch occupies residues 1–24 (MPYLHRSLRPQPQPVPRDARTVHS). The region spanning 42–337 (LFEDADFPAS…FDKVEICNLT (296 aa)) is the Calpain catalytic domain. 3 residues coordinate Ca(2+): Leu81, Gly83, and Asp88. Residue Cys97 is part of the active site. Ca(2+) is bound at residue Glu167. Active-site residues include His254 and Asn278. 5 residues coordinate Ca(2+): Glu284, Asp291, Leu312, Asp314, and Glu316. Positions 338-521 (PDALEDNTLH…PQEEETEEER (184 aa)) are domain III. The segment at 522–690 (QFRALFRRIA…NEFINLTMNI (169 aa)) is domain IV. EF-hand domains lie at 534-552 (DMEV…VLQK), 561-589 (LSLL…FRVF), and 591-626 (DKLR…AGFQ). Residues Asp574, Ser576, Asn578, Lys580, Glu585, Asp604, Asp606, Ser608, Thr610, and Glu615 each coordinate Ca(2+).

This sequence belongs to the peptidase C2 family. In terms of tissue distribution, predominantly expressed in stomach and small intestine, although low levels of expression in other organs.

Its function is as follows. Calcium-regulated non-lysosomal thiol-protease. The protein is Calpain-9 (Capn9) of Rattus norvegicus (Rat).